The primary structure comprises 309 residues: Glutaminase (309 aa).

Substrate is bound by residues Ser-64, Asn-114, Glu-160, Asn-167, Tyr-191, Tyr-243, and Val-261.

The protein belongs to the glutaminase family. Homotetramer.

It carries out the reaction L-glutamine + H2O = L-glutamate + NH4(+). In Rhizobium johnstonii (strain DSM 114642 / LMG 32736 / 3841) (Rhizobium leguminosarum bv. viciae), this protein is Glutaminase.